A 129-amino-acid polypeptide reads, in one-letter code: Large ribosomal subunit protein bL17 (129 aa).

This sequence belongs to the bacterial ribosomal protein bL17 family. In terms of assembly, part of the 50S ribosomal subunit. Contacts protein L32.

The chain is Large ribosomal subunit protein bL17 from Pasteurella multocida (strain Pm70).